Reading from the N-terminus, the 330-residue chain is tRNA U34 carboxymethyltransferase (330 aa).

Carboxy-S-adenosyl-L-methionine-binding positions include Lys91, Trp105, Lys110, Gly130, 152 to 154 (DPS), 181 to 182 (IE), Met196, Tyr200, and Arg315.

Belongs to the class I-like SAM-binding methyltransferase superfamily. CmoB family. As to quaternary structure, homotetramer.

The catalysed reaction is carboxy-S-adenosyl-L-methionine + 5-hydroxyuridine(34) in tRNA = 5-carboxymethoxyuridine(34) in tRNA + S-adenosyl-L-homocysteine + H(+). In terms of biological role, catalyzes carboxymethyl transfer from carboxy-S-adenosyl-L-methionine (Cx-SAM) to 5-hydroxyuridine (ho5U) to form 5-carboxymethoxyuridine (cmo5U) at position 34 in tRNAs. The polypeptide is tRNA U34 carboxymethyltransferase (Shewanella pealeana (strain ATCC 700345 / ANG-SQ1)).